The chain runs to 623 residues: V-type proton ATPase catalytic subunit A (623 aa).

252 to 259 (GAFGCGKT) is an ATP binding site.

Belongs to the ATPase alpha/beta chains family. As to quaternary structure, V-ATPase is a heteromultimeric enzyme composed of a peripheral catalytic V1 complex (main components: subunits A, B, C, D, E, and F) attached to an integral membrane V0 proton pore complex (main component: the proteolipid protein).

It carries out the reaction ATP + H2O + 4 H(+)(in) = ADP + phosphate + 5 H(+)(out). Catalytic subunit of the peripheral V1 complex of vacuolar ATPase. V-ATPase vacuolar ATPase is responsible for acidifying a variety of intracellular compartments in eukaryotic cells. This Brassica napus (Rape) protein is V-type proton ATPase catalytic subunit A.